The primary structure comprises 348 residues: D-erythrose-4-phosphate dehydrogenase (348 aa).

Residues 12 to 13 and R81 contribute to the NAD(+) site; that span reads RI. Substrate-binding positions include 154-156, R200, 213-214, and R236; these read SCT and TK. The active-site Nucleophile is C155. An NAD(+)-binding site is contributed by N318.

This sequence belongs to the glyceraldehyde-3-phosphate dehydrogenase family. Epd subfamily. As to quaternary structure, homotetramer.

Its subcellular location is the cytoplasm. The enzyme catalyses D-erythrose 4-phosphate + NAD(+) + H2O = 4-phospho-D-erythronate + NADH + 2 H(+). Its pathway is cofactor biosynthesis; pyridoxine 5'-phosphate biosynthesis; pyridoxine 5'-phosphate from D-erythrose 4-phosphate: step 1/5. Catalyzes the NAD-dependent conversion of D-erythrose 4-phosphate to 4-phosphoerythronate. The chain is D-erythrose-4-phosphate dehydrogenase from Salmonella gallinarum (strain 287/91 / NCTC 13346).